A 270-amino-acid chain; its full sequence is 4-hydroxy-tetrahydrodipicolinate reductase (270 aa).

Residues 8 to 13 (GALGRM), aspartate 34, 102 to 104 (GTT), and 128 to 131 (SQNY) contribute to the NAD(+) site. Histidine 160 (proton donor/acceptor) is an active-site residue. Histidine 161 serves as a coordination point for (S)-2,3,4,5-tetrahydrodipicolinate. Lysine 164 (proton donor) is an active-site residue. 170–171 (GT) serves as a coordination point for (S)-2,3,4,5-tetrahydrodipicolinate.

This sequence belongs to the DapB family.

The protein localises to the cytoplasm. It catalyses the reaction (S)-2,3,4,5-tetrahydrodipicolinate + NAD(+) + H2O = (2S,4S)-4-hydroxy-2,3,4,5-tetrahydrodipicolinate + NADH + H(+). The enzyme catalyses (S)-2,3,4,5-tetrahydrodipicolinate + NADP(+) + H2O = (2S,4S)-4-hydroxy-2,3,4,5-tetrahydrodipicolinate + NADPH + H(+). The protein operates within amino-acid biosynthesis; L-lysine biosynthesis via DAP pathway; (S)-tetrahydrodipicolinate from L-aspartate: step 4/4. Catalyzes the conversion of 4-hydroxy-tetrahydrodipicolinate (HTPA) to tetrahydrodipicolinate. In Methanococcus maripaludis (strain C5 / ATCC BAA-1333), this protein is 4-hydroxy-tetrahydrodipicolinate reductase.